The chain runs to 394 residues: 2-oxoglutarate and iron-dependent oxygenase domain-containing protein CP2 (394 aa).

The disordered stretch occupies residues 1–35 (MSSEQREGSQETTTTTVEGNGTIAGQNSHSAAPTT). Polar residues predominate over residues 17–35 (VEGNGTIAGQNSHSAAPTT). Positions 248-347 (DSHHGFVVEY…RVNMLLWCRS (100 aa)) constitute a Fe2OG dioxygenase domain. Residues H268, D270, and H328 each contribute to the Fe cation site. Residue R338 coordinates 2-oxoglutarate.

Fe(2+) serves as cofactor. Requires L-ascorbate as cofactor. Expressed in roots, cotyledons, rosette leaves, cauline leaves, inflorescences and siliques.

Its subcellular location is the nucleus. The protein resides in the nucleoplasm. Its function is as follows. Participates in the epigenetic repression of flowering genes in association with ICU11. Functions in the repression of several members of the MADS-box transcription factors family, including SEP3, during vegetative development via histone modification. This Arabidopsis thaliana (Mouse-ear cress) protein is 2-oxoglutarate and iron-dependent oxygenase domain-containing protein CP2.